Here is a 782-residue protein sequence, read N- to C-terminus: General transcription and DNA repair factor IIH helicase/translocase subunit XPB (782 aa).

Residues 1 to 11 (MGRKDKSDREK) are compositionally biased toward basic and acidic residues. Disordered stretches follow at residues 1–47 (MGRK…VDES) and 211–242 (TISS…SGTQ). A Nuclear localization signal motif is present at residues 6–17 (KSDREKKSKKRY). A compositionally biased stretch (acidic residues) spans 19-28 (EDEEEDEEVI). Positions 211 to 223 (TISSKSAISKSQQ) are enriched in low complexity. Over residues 224-242 (DNGGPSSSQPADGQRSGTQ) the composition is skewed to polar residues. Residues 326 to 487 (MFGNGRARSG…DLNFLIGPKL (162 aa)) enclose the Helicase ATP-binding domain. 339–346 (LPCGAGKS) provides a ligand contact to ATP. A DEVH box motif is present at residues 440–443 (DEVH). A Helicase C-terminal domain is found at 541 to 701 (RACQFLIRFH…LAGMEEEDLM (161 aa)).

This sequence belongs to the helicase family. RAD25/XPB subfamily. In terms of assembly, component of the 7-subunit TFIIH core complex composed of XPB/ERCC3, XPD/ERCC2, GTF2H1, GTF2H2, GTF2H3, GTF2H4 and GTF2H5, which is active in NER. The core complex associates with the 3-subunit CDK-activating kinase (CAK) module composed of CCNH/cyclin H, CDK7 and MNAT1 to form the 10-subunit holoenzyme (holo-TFIIH) active in transcription. Interacts with PUF60. Interacts with ATF7IP. Interacts with Epstein-Barr virus EBNA2.

The protein resides in the nucleus. The catalysed reaction is Couples ATP hydrolysis with the unwinding of duplex DNA by translocating in the 3'-5' direction.. It catalyses the reaction ATP + H2O = ADP + phosphate + H(+). Its function is as follows. ATP-dependent 3'-5' DNA helicase/translocase; binds dsDNA rather than ssDNA, unzipping it in a translocase rather than classical helicase activity. Component of the general transcription and DNA repair factor IIH (TFIIH) core complex. When complexed to CDK-activating kinase (CAK), involved in RNA transcription by RNA polymerase II. The ATPase activity of XPB/ERCC3, but not its helicase activity, is required for DNA opening; it may wrap around the damaged DNA wedging it open, causing localized melting and twisting that allows XPD/ERCC2 helicase to anchor. The ATP-dependent helicase activity of XPB/ERCC3 may be required for promoter escape. Also involved in transcription-coupled nucleotide excision repair (NER) of damaged DNA. In NER, TFIIH acts by opening DNA around the lesion to allow the excision of the damaged oligonucleotide and its replacement by a new DNA fragment. This chain is General transcription and DNA repair factor IIH helicase/translocase subunit XPB (ercc3), found in Danio rerio (Zebrafish).